A 574-amino-acid chain; its full sequence is Transmembrane protein 108 (574 aa).

A helical membrane pass occupies residues 9-29; that stretch reads YCQLLSFLLTLALTKALVLAV. The segment at 31–169 is interaction with SH3GL2; that stretch reads EPSPRESLQT…ATTRRPPRPP (139 aa). Disordered stretches follow at residues 32-352 and 364-417; these read PSPR…SGVF and DATV…PRPL. A compositionally biased stretch (polar residues) spans 58–86; it reads TRLSSVLTLNPTPDGPSSQAAATLETTVS. The segment covering 132 to 160 has biased composition (low complexity); sequence LPPGDATPTTTLPTKPAGTTSRPTVAPRA. The tract at residues 173-406 is interaction with DST (isoform 1); that stretch reads RKGAGGSTRT…SPAEEEAEAS (234 aa). Positions 245–271 are enriched in polar residues; it reads FSSTQPQTVSPATAPRSTSRVPPTTSL. Positions 292–312 are enriched in low complexity; that stretch reads TSPGGEPAATAATGAPASTQP. Over residues 316-332 the composition is skewed to polar residues; the sequence is PSQSPHGDVQDSASHSD. A helical membrane pass occupies residues 468 to 488; that stretch reads IAWVIVAISVPISSCSVLLTV. Positions 489–574 are interaction with CYFIP2; it reads CCMRRKKKTA…FVGNDQVSEI (86 aa).

In terms of assembly, interacts with DST (isoform 1). Interacts with SH3GL2. Interacts (via N-terminus) with CYFIP1 and CYFIP2; the interactions associate TMEM108 with the WAVE1 complex. In terms of processing, glycosylated. In terms of tissue distribution, expressed in the nervous system tissues, such as hippocampus and spinal cord, is barely detectable in peripheral tissues such as heart, lung, liver, kidney and muscle. In brain, highly expressed in dentate gyrus neurons and expressed in cortex, olfactory bulb, ammon's horn, cerebellum, hypothalamus and striatum.

It localises to the membrane. The protein localises to the postsynaptic density. It is found in the endosome membrane. Its subcellular location is the cell projection. The protein resides in the axon. It localises to the dendrite. The protein localises to the early endosome. Functionally, transmembrane protein required for proper cognitive functions. Involved in the development of dentate gyrus (DG) neuron circuitry, is necessary for AMPA receptors surface expression and proper excitatory postsynaptic currents of DG granule neurons. Regulates the organization and stability of the microtubule network of sensory neurons to allow axonal transport. Through the interaction with DST, mediates the docking of the dynein/dynactin motor complex to vesicle cargos for retrograde axonal transport. In hippocampal neurons, required for BDNF-dependent dendrite outgrowth. Cooperates with SH3GL2 and recruits the WAVE1 complex to facilitate actin-dependent BDNF:NTRK2 early endocytic trafficking and mediate signaling from early endosomes. The protein is Transmembrane protein 108 of Mus musculus (Mouse).